Consider the following 274-residue polypeptide: MAHYFVGDVQGCFTELQKVLEKVDFNPSQDELWAVGDLVARGPDSLATLRFFKSLGDSAKTVLGNHDLHLMAIHGKLKRDKPSDNLKALLKADDINELIDWLRQQPLMRELPEQQLIMTHAGVPPQWSLETLRQESALVSHALKQDDYLEALISQMYTDTAERWEPTALGIARLRFCINALTRMRYLYVDGHLNFDCKQPPQDCTDPQLRPWYEYTSPLRQSHTLVFGHWAALMGNVNDKKLKALDTGCCWGEHLTLWHLEKDQKITQKRLKKS.

It belongs to the Ap4A hydrolase family.

The catalysed reaction is P(1),P(4)-bis(5'-adenosyl) tetraphosphate + H2O = 2 ADP + 2 H(+). Functionally, hydrolyzes diadenosine 5',5'''-P1,P4-tetraphosphate to yield ADP. The chain is Bis(5'-nucleosyl)-tetraphosphatase, symmetrical from Shewanella sp. (strain W3-18-1).